The following is a 244-amino-acid chain: tRNA1(Val) (adenine(37)-N6)-methyltransferase (244 aa).

This sequence belongs to the methyltransferase superfamily. tRNA (adenine-N(6)-)-methyltransferase family.

Its subcellular location is the cytoplasm. It catalyses the reaction adenosine(37) in tRNA1(Val) + S-adenosyl-L-methionine = N(6)-methyladenosine(37) in tRNA1(Val) + S-adenosyl-L-homocysteine + H(+). Functionally, specifically methylates the adenine in position 37 of tRNA(1)(Val) (anticodon cmo5UAC). This chain is tRNA1(Val) (adenine(37)-N6)-methyltransferase, found in Shewanella sediminis (strain HAW-EB3).